Reading from the N-terminus, the 747-residue chain is Kinesin-like protein KIF3B (747 aa).

Residue Met-1 is modified to N-acetylmethionine. Ser-2 carries the N-acetylserine; in Kinesin-like protein KIF3B, N-terminally processed modification. One can recognise a Kinesin motor domain in the interval 9–340 (SVRVVVRCRP…LRYANRAKNI (332 aa)). ATP is bound at residue 96 to 103 (GQTGTGKT). A coiled-coil region spans residues 346-579 (VNEDPKDALL…EQTQNELTRE (234 aa)). Disordered regions lie at residues 374–412 (IGRR…DKDD) and 698–747 (IQVD…LVPK). Acidic residues predominate over residues 393-411 (GEEEEEEGEEGEEDGDDKD). The interval 580 to 747 (LKLKHLIIEN…YPQSRGLVPK (168 aa)) is globular. Residues 701–710 (DASSFESTAS) are compositionally biased toward polar residues. Residues 711 to 721 (RKPKARPKSGR) are compositionally biased toward basic residues. Positions 722–735 (KSGSSSSSSGNPAS) are enriched in low complexity.

The protein belongs to the TRAFAC class myosin-kinesin ATPase superfamily. Kinesin family. Kinesin II subfamily. As to quaternary structure, heterodimer of KIF3A and KIF3B. KIF3A/KIF3B heterodimer interacts with KIFAP3 forming a heterotrimeric (KIF3A/KIF3B/KIFAP3) complex. Interacts with the SMC3 subunit of the cohesin complex. Interacts directly with IFT20. Interacts with FLCN.

The protein resides in the cytoplasm. It localises to the cytoskeleton. Its subcellular location is the cell projection. It is found in the cilium. The protein localises to the dendritic spine. Microtubule-based molecular motor that transport intracellular cargos, such as vesicles, organelles and protein complexes. Uses ATP hydrolysis to generate force to bind and move along the microtubule. Plays a role in cilia formation. Involved in photoreceptor integrity and opsin trafficking in rod photoreceptors. Transports vesicles containing N-methyl-D-aspartate (NMDA) receptor subunit GRIN2A into neuronal dendrites. This chain is Kinesin-like protein KIF3B, found in Mus musculus (Mouse).